The following is a 78-amino-acid chain: Large ribosomal subunit protein bL28 (78 aa).

It belongs to the bacterial ribosomal protein bL28 family.

The protein is Large ribosomal subunit protein bL28 of Prochlorococcus marinus (strain MIT 9301).